Here is a 105-residue protein sequence, read N- to C-terminus: Dynein axonemal light chain 4 (105 aa).

The protein belongs to the dynein light chain family. Consists of at least two heavy chains and a number of intermediate and light chains.

It localises to the cytoplasm. The protein resides in the cytoskeleton. It is found in the cilium axoneme. Force generating protein of respiratory cilia. Produces force towards the minus ends of microtubules. Dynein has ATPase activity. In Mus musculus (Mouse), this protein is Dynein axonemal light chain 4 (Dnal4).